The primary structure comprises 361 residues: 5-formaminoimidazole-4-carboxamide-1-(beta)-D-ribofuranosyl 5'-monophosphate synthetase (361 aa).

Positions 27 and 94 each coordinate 5-amino-1-(5-phospho-beta-D-ribosyl)imidazole-4-carboxamide. An ATP-grasp domain is found at 116–348 (RAILRWEAER…MGQRIAKEIK (233 aa)). ATP is bound by residues 146–208 (PDEI…ANYC) and glutamate 230. Residue asparagine 258 participates in 5-amino-1-(5-phospho-beta-D-ribosyl)imidazole-4-carboxamide binding. Residues glutamine 297 and glutamate 310 each coordinate Mg(2+).

This sequence belongs to the phosphohexose mutase family. The cofactor is Mg(2+). Requires Mn(2+) as cofactor.

It catalyses the reaction 5-amino-1-(5-phospho-beta-D-ribosyl)imidazole-4-carboxamide + formate + ATP = 5-formamido-1-(5-phospho-D-ribosyl)imidazole-4-carboxamide + ADP + phosphate. Its pathway is purine metabolism; IMP biosynthesis via de novo pathway; 5-formamido-1-(5-phospho-D-ribosyl)imidazole-4-carboxamide from 5-amino-1-(5-phospho-D-ribosyl)imidazole-4-carboxamide (formate route): step 1/1. Functionally, catalyzes the ATP- and formate-dependent formylation of 5-aminoimidazole-4-carboxamide-1-beta-d-ribofuranosyl 5'-monophosphate (AICAR) to 5-formaminoimidazole-4-carboxamide-1-beta-d-ribofuranosyl 5'-monophosphate (FAICAR) in the absence of folates. The polypeptide is 5-formaminoimidazole-4-carboxamide-1-(beta)-D-ribofuranosyl 5'-monophosphate synthetase (Methanococcus maripaludis (strain DSM 14266 / JCM 13030 / NBRC 101832 / S2 / LL)).